A 140-amino-acid chain; its full sequence is Acyl-coenzyme A thioesterase 13 (140 aa).

Met1 carries the N-acetylmethionine modification. Lys27, Lys37, and Lys43 each carry N6-acetyllysine. Position 46 (Glu46) interacts with CoA. The substrate site is built by Asn50 and Gly81. Residues Ser83, Tyr90–Lys95, and Lys108–Leu113 contribute to the CoA site. Residues Lys108 and Lys127 each carry the N6-acetyllysine modification. His137 serves as a coordination point for CoA.

The protein belongs to the thioesterase PaaI family. In terms of assembly, homotetramer. Interacts with PCTP. In terms of tissue distribution, highly expressed in the kidney and moderately in the heart, liver, brain, small and large intestine. Also expressed in brown adipose tissue.

Its subcellular location is the cytoplasm. The protein localises to the cytosol. It localises to the mitochondrion. The protein resides in the nucleus. It is found in the cytoskeleton. Its subcellular location is the spindle. It catalyses the reaction a fatty acyl-CoA + H2O = a fatty acid + CoA + H(+). The enzyme catalyses decanoyl-CoA + H2O = decanoate + CoA + H(+). The catalysed reaction is octanoyl-CoA + H2O = octanoate + CoA + H(+). It carries out the reaction butanoyl-CoA + H2O = butanoate + CoA + H(+). It catalyses the reaction hexanoyl-CoA + H2O = hexanoate + CoA + H(+). The enzyme catalyses tetradecanoyl-CoA + H2O = tetradecanoate + CoA + H(+). The catalysed reaction is hexadecanoyl-CoA + H2O = hexadecanoate + CoA + H(+). It carries out the reaction dodecanoyl-CoA + H2O = dodecanoate + CoA + H(+). It catalyses the reaction (9Z)-octadecenoyl-CoA + H2O = (9Z)-octadecenoate + CoA + H(+). Functionally, catalyzes the hydrolysis of acyl-CoAs into free fatty acids and coenzyme A (CoASH), regulating their respective intracellular levels. Has acyl-CoA thioesterase activity towards medium (C12) and long-chain (C18) fatty acyl-CoA substrates. Can also hydrolyze 3-hydroxyphenylacetyl-CoA and 3,4-dihydroxyphenylacetyl-CoA (in vitro). May play a role in controlling adaptive thermogenesis. In Mus musculus (Mouse), this protein is Acyl-coenzyme A thioesterase 13.